A 118-amino-acid polypeptide reads, in one-letter code: ATP-dependent Clp protease adapter protein ClpS (118 aa).

The segment at 1 to 24 is disordered; that stretch reads MNGSSNSGSPGGGQTGDDDGTGFD.

The protein belongs to the ClpS family. In terms of assembly, binds to the N-terminal domain of the chaperone ClpA.

In terms of biological role, involved in the modulation of the specificity of the ClpAP-mediated ATP-dependent protein degradation. This Hyphomonas neptunium (strain ATCC 15444) protein is ATP-dependent Clp protease adapter protein ClpS.